Consider the following 142-residue polypeptide: Transcriptional regulator MraZ (142 aa).

2 consecutive SpoVT-AbrB domains span residues 5-51 (ASAL…PRPE) and 77-120 (AADV…DAAT).

This sequence belongs to the MraZ family. In terms of assembly, forms oligomers.

The protein localises to the cytoplasm. It localises to the nucleoid. This chain is Transcriptional regulator MraZ, found in Ralstonia pickettii (strain 12J).